Consider the following 122-residue polypeptide: Class I hydrophobin 2 (122 aa).

An N-terminal signal peptide occupies residues 1 to 22; it reads MFARVSTLFAMFFLGLALMVSA. Cystine bridges form between cysteine 40-cysteine 101, cysteine 47-cysteine 95, cysteine 48-cysteine 81, and cysteine 102-cysteine 115.

The protein belongs to the fungal hydrophobin family. As to quaternary structure, self-assembles to form functional amyloid fibrils called rodlets. Self-assembly into fibrillar rodlets occurs spontaneously at hydrophobic:hydrophilic interfaces and the rodlets further associate laterally to form amphipathic monolayers.

The protein localises to the secreted. It localises to the cell wall. Functionally, aerial growth, conidiation, and dispersal of filamentous fungi in the environment rely upon a capability of their secreting small amphipathic proteins called hydrophobins (HPBs) with low sequence identity. Class I can self-assemble into an outermost layer of rodlet bundles on aerial cell surfaces, conferring cellular hydrophobicity that supports fungal growth, development and dispersal; whereas Class II form highly ordered films at water-air interfaces through intermolecular interactions but contribute nothing to the rodlet structure. Hah2 is a class I hydrophobin that is involved in aerial growth of mycelia, but does not play a role in pathogenesis. This chain is Class I hydrophobin 2, found in Heterobasidion annosum (Root rot fungus).